Reading from the N-terminus, the 220-residue chain is Iron-sulfur flavoprotein AF_1436 (220 aa).

[4Fe-4S] cluster-binding residues include cysteine 47, cysteine 50, cysteine 53, and cysteine 59.

Belongs to the SsuE family. Isf subfamily. As to quaternary structure, homodimer. Requires FMN as cofactor. The cofactor is [4Fe-4S] cluster.

Its function is as follows. Redox-active protein probably involved in electron transport. This chain is Iron-sulfur flavoprotein AF_1436, found in Archaeoglobus fulgidus (strain ATCC 49558 / DSM 4304 / JCM 9628 / NBRC 100126 / VC-16).